The following is a 33-amino-acid chain: Glucagon-2 (33 aa).

The protein belongs to the glucagon family.

It is found in the secreted. Functionally, promotes hydrolysis of glycogen and lipids, and raises the blood sugar level. This Oreochromis niloticus (Nile tilapia) protein is Glucagon-2 (gcg2).